Here is a 248-residue protein sequence, read N- to C-terminus: 2-C-methyl-D-erythritol 4-phosphate cytidylyltransferase (248 aa).

It belongs to the IspD/TarI cytidylyltransferase family. IspD subfamily.

The catalysed reaction is 2-C-methyl-D-erythritol 4-phosphate + CTP + H(+) = 4-CDP-2-C-methyl-D-erythritol + diphosphate. It participates in isoprenoid biosynthesis; isopentenyl diphosphate biosynthesis via DXP pathway; isopentenyl diphosphate from 1-deoxy-D-xylulose 5-phosphate: step 2/6. Catalyzes the formation of 4-diphosphocytidyl-2-C-methyl-D-erythritol from CTP and 2-C-methyl-D-erythritol 4-phosphate (MEP). This chain is 2-C-methyl-D-erythritol 4-phosphate cytidylyltransferase, found in Corynebacterium efficiens (strain DSM 44549 / YS-314 / AJ 12310 / JCM 11189 / NBRC 100395).